The sequence spans 516 residues: Cyclic AMP response element-binding protein A (516 aa).

A phosphoserine mark is found at S75, S79, and S82. Disordered regions lie at residues 213–237 (KDEP…SQHQ), 294–338 (KSEK…HLFA), and 353–408 (PAGG…KGST). Residues 221–237 (SSCPASPTSQASSSQHQ) show a composition bias toward low complexity. Residues 361-392 (RVSRTAASITRSSSGSASASGSSTSSTVTTTR) show a composition bias toward low complexity. In terms of domain architecture, bZIP spans 441-504 (SLKKIRRKIK…ANLLSQLHKL (64 aa)). The tract at residues 443 to 463 (KKIRRKIKNKISAQESRRKKK) is basic motif. A leucine-zipper region spans residues 469–476 (LERRVEIL).

It belongs to the bZIP family. In terms of assembly, may bind DNA as heterodimers with other bZIP proteins. In terms of tissue distribution, in all cell types examined, including developing salivary gland in embryos and in adults, brain and optic lobe cell bodies, salivary gland, midgut epithelial cells of the cardia, female ovarian columnar follicle cells and male seminal vesicle, ejaculatory duct, and ejaculatory bulb.

It is found in the nucleus. Its function is as follows. Transcriptional activator. Binds to fat body-specific enhancers of alcohol dehydrogenase (ADH) and yolk protein genes. BBF-2 may play a role in fat body gene expression. It binds the consensus sequence 5'-T[AC]NACGTAN[TG]C-3'. The chain is Cyclic AMP response element-binding protein A (CrebA) from Drosophila melanogaster (Fruit fly).